We begin with the raw amino-acid sequence, 602 residues long: GTP-binding protein 2 (602 aa).

Positions 18 to 64 (GPAMGGNLKARGAGGSSSCGGPKGKKKNGRNRGGKANNPPYLPPEAE) are disordered. The span at 29–39 (GAGGSSSCGGP) shows a compositional bias: gly residues. The span at 40 to 50 (KGKKKNGRNRG) shows a compositional bias: basic residues. A tr-type G domain is found at 170-398 (FLDLRVAVLG…LNILPPLTNS (229 aa)). GTP contacts are provided by residues 179–186 (GNVDSGKS), 260–264 (DLAGH), and 316–319 (SKVD).

It belongs to the TRAFAC class translation factor GTPase superfamily. Classic translation factor GTPase family. GTPBP1 subfamily. Predominantly expressed in thymus, spleen, and testis. Expressed at lower levels in brain, heart, lung, kidney, and skeletal muscle. In testis, specifically expressed in spermatocytes and round spermatids.

This is GTP-binding protein 2 from Mus musculus (Mouse).